Reading from the N-terminus, the 1032-residue chain is MIPEAFQPRAMKHTTTVLMLALSSRFWSVCADFPEVYGGESAGFGPVFEEQPLDTIYPEESPEEKITLTCRTRANPPASYRWRLNNAELVLAEGSDPHYSVSEGNLLISSPDKSKHAGNYTCVASNQYGSVTSRRARVQFGYLDMFSTDEREAVYVKEGQGAVLLCAPPPHFPEDLSFRWMLNEFPEFIPLDQRRFVSQSTGNLYISTVRSTDSGNYSCFVSSPAIAKSVFSKFIPLVPIAERSLRKYPADIKVKSPDSWALLGQNVTLECFALGNPIPQIRWRKLDGVLPPLRHDVSMSGALLHLYSLQYEDEGLYECEADNSKGKDWHKTHLYVEGAPDWLEQISSSEVDIGGDYIMSCQASGKPKPHVHFLKNGHMYMKGHEVRFSRLGFEDSGMYQCVAENRHGVIHANAELRVFASAPSFQYNPVKPKLLGARNGRVVFECRPRAAPRPNITWSKGTELLHNSSRISIWLDGSLELLNISKSDEGKYTCFAENDRGRANSTGSLSITDATKITLAPSNADVSVGEDARMECVASHDPGLDLTFIWSLDGHTINLQRDAQHYQRKMDSASGTSSSELLITHTQLRHAGRYSCTAQTPVDNTTASAELVVRGPPGPPGGVRVDEVTSDSVRVLWSHGTDNLSPISRYTVQLRESAAQQDWRDAATSPVNVEGNAEMATVVNLLPWTEYEFRVIATNTLGTGPPSEPSPKTTTREARPIVAPSDIGGGGGTSRELTITWTPVQSQYYYGSNFGYIIAFKPHNDPEWLRVTVTDPEAQKYVHKDPKIPPSTRFEVKMKAFNSQGEGPFSNSAFIYSAQDVPAEAPIITEARALSATEAIVIWVPVQLPTVERYQVRYWRESVENEASAQRVLVSSRENHTRLDNMKPDSHYLVEVRACNGAGYGPASQRNRIYTKKSPPSRPPKIISTKMHYSGTSINIAWEKVESLNNESTVAGYKVLYRQHGQPSGTLYTTEKQSIDLPMRRGEYLVEVRAHSEGGDGAVAQVRITGSAPAPALASALLLLPLLWTLML.

The N-terminal stretch at M1–A31 is a signal peptide. 6 consecutive Ig-like C2-type domains span residues P46–Q139, D144–F231, P249–Y335, P340–R417, P423–S510, and T515–V612. 2 disulfide bridges follow: C70–C122 and C166–C219. 3 N-linked (GlcNAc...) asparagine glycosylation sites follow: N119, N216, and N266. 3 disulfides stabilise this stretch: C271–C319, C361–C401, and C446–C494. 4 N-linked (GlcNAc...) asparagine glycosylation sites follow: N455, N467, N483, and N504. A disulfide bridge links C536 with C596. N-linked (GlcNAc...) asparagine glycosylation occurs at N604. Fibronectin type-III domains follow at residues P619–A718, A723–D820, A825–S918, and P920–P1015. The disordered stretch occupies residues N699–G729. An N-linked (GlcNAc...) asparagine glycan is attached at N879. The segment at A907 to I926 is disordered. N950 carries N-linked (GlcNAc...) asparagine glycosylation. The GPI-anchor amidated glycine moiety is linked to residue G1010. The propeptide at S1011 to L1032 is removed in mature form.

This sequence belongs to the immunoglobulin superfamily. Contactin family. As to expression, expressed in brain.

Its subcellular location is the cell membrane. Its function is as follows. Mediates cell surface interactions during nervous system development. This chain is Contactin-1a (cntn1a), found in Danio rerio (Zebrafish).